The sequence spans 241 residues: Orotidine 5'-phosphate decarboxylase (241 aa).

Substrate contacts are provided by residues D18, K39, 66–75 (DLKFHDIPAT), T130, R192, Q201, G221, and R222. The active-site Proton donor is K68.

Belongs to the OMP decarboxylase family. Type 1 subfamily. In terms of assembly, homodimer.

It catalyses the reaction orotidine 5'-phosphate + H(+) = UMP + CO2. It functions in the pathway pyrimidine metabolism; UMP biosynthesis via de novo pathway; UMP from orotate: step 2/2. Functionally, catalyzes the decarboxylation of orotidine 5'-monophosphate (OMP) to uridine 5'-monophosphate (UMP). This Synechococcus sp. (strain CC9605) protein is Orotidine 5'-phosphate decarboxylase.